Reading from the N-terminus, the 476-residue chain is Trigger factor (476 aa).

Residues 174-261 (GDIAVVSFKG…LKDLKEKELP (88 aa)) form the PPIase FKBP-type domain. The disordered stretch occupies residues 436–476 (KENTTKTSKTTKNSKTTKATKTTKTTKTTKTSKTQNKKEKK). Positions 440–469 (TKTSKTTKNSKTTKATKTTKTTKTTKTSKT) are enriched in low complexity.

The protein belongs to the FKBP-type PPIase family. Tig subfamily.

It localises to the cytoplasm. It catalyses the reaction [protein]-peptidylproline (omega=180) = [protein]-peptidylproline (omega=0). In terms of biological role, involved in protein export. Acts as a chaperone by maintaining the newly synthesized protein in an open conformation. Functions as a peptidyl-prolyl cis-trans isomerase. This Prochlorococcus marinus (strain MIT 9215) protein is Trigger factor.